The following is a 134-amino-acid chain: Phosphoribosyl-AMP cyclohydrolase (134 aa).

A Mg(2+)-binding site is contributed by aspartate 80. Cysteine 81 is a Zn(2+) binding site. Positions 82 and 84 each coordinate Mg(2+). The Zn(2+) site is built by cysteine 98 and cysteine 105.

The protein belongs to the PRA-CH family. In terms of assembly, homodimer. The cofactor is Mg(2+). Zn(2+) serves as cofactor.

It is found in the cytoplasm. It carries out the reaction 1-(5-phospho-beta-D-ribosyl)-5'-AMP + H2O = 1-(5-phospho-beta-D-ribosyl)-5-[(5-phospho-beta-D-ribosylamino)methylideneamino]imidazole-4-carboxamide. It functions in the pathway amino-acid biosynthesis; L-histidine biosynthesis; L-histidine from 5-phospho-alpha-D-ribose 1-diphosphate: step 3/9. Functionally, catalyzes the hydrolysis of the adenine ring of phosphoribosyl-AMP. This Janthinobacterium sp. (strain Marseille) (Minibacterium massiliensis) protein is Phosphoribosyl-AMP cyclohydrolase.